The chain runs to 600 residues: Integrator complex subunit 11 (600 aa).

Zn(2+) contacts are provided by His-68, His-70, Asp-72, His-73, His-157, and Asp-178. Positions 68–73 (HFHLDH) match the HXHXDH motif motif. The active site involves Glu-203. Lys-381 is covalently cross-linked (Glycyl lysine isopeptide (Lys-Gly) (interchain with G-Cter in SUMO)). His-414 contributes to the Zn(2+) binding site. Residues Lys-462 and Lys-475 each participate in a glycyl lysine isopeptide (Lys-Gly) (interchain with G-Cter in SUMO) cross-link. Residues 469–479 (LLPEAKKPRLL) carry the Nuclear localization signal motif.

Belongs to the metallo-beta-lactamase superfamily. RNA-metabolizing metallo-beta-lactamase-like family. INTS11 subfamily. As to quaternary structure, component of the Integrator complex, composed of core subunits INTS1, INTS2, INTS3, INTS4, INTS5, INTS6, INTS7, INTS8, INTS9/RC74, INTS10, INTS11/CPSF3L, INTS12, INTS13, INTS14 and INTS15. The core complex associates with protein phosphatase 2A subunits PPP2CA and PPP2R1A, to form the Integrator-PP2A (INTAC) complex. INTS11 is part of the RNA endonuclease subcomplex, composed of INTS4, INTS9, INTS11 and inositol hexakisphosphate (InsP6). Interacts with WDR73; interaction is required for the assembly of the RNA endonuclease subcomplex in the cytoplasm. Interacts with BRAT1; interaction is required for the assembly of the RNA endonuclease subcomplex and inhibits the endonuclease activity of INTS11 before formation of mature integrator complex. The cofactor is Zn(2+). Post-translationally, sumoylated; sumoylation regulates its subcellular location and is required for integrator complex integrity.

Its subcellular location is the nucleus. It localises to the cytoplasm. The RNA endonuclease activity is inhibited by BRAT1 that forms hyrogen bond and hydrophobic interactions with the active site. RNA endonuclease component of the integrator complex, a multiprotein complex that terminates RNA polymerase II (Pol II) transcription in the promoter-proximal region of genes. The integrator complex provides a quality checkpoint during transcription elongation by driving premature transcription termination of transcripts that are unfavorably configured for transcriptional elongation: the complex terminates transcription by (1) catalyzing dephosphorylation of the C-terminal domain (CTD) of Pol II subunit POLR2A/RPB1 and SUPT5H/SPT5, (2) degrading the exiting nascent RNA transcript via endonuclease activity and (3) promoting the release of Pol II from bound DNA. The integrator complex is also involved in terminating the synthesis of non-coding Pol II transcripts, such as enhancer RNAs (eRNAs), small nuclear RNAs (snRNAs), telomerase RNAs and long non-coding RNAs (lncRNAs). Within the integrator complex, INTS11 constitutes the RNA endonuclease subunit that degrades exiting nascent RNA transcripts. Mediates recruitment of cytoplasmic dynein to the nuclear envelope, probably as component of the integrator complex. This is Integrator complex subunit 11 (INTS11) from Pongo abelii (Sumatran orangutan).